The chain runs to 360 residues: UDP-3-O-acylglucosamine N-acyltransferase (360 aa).

Residue His-248 is the Proton acceptor of the active site.

The protein belongs to the transferase hexapeptide repeat family. LpxD subfamily. As to quaternary structure, homotrimer.

The enzyme catalyses a UDP-3-O-[(3R)-3-hydroxyacyl]-alpha-D-glucosamine + a (3R)-hydroxyacyl-[ACP] = a UDP-2-N,3-O-bis[(3R)-3-hydroxyacyl]-alpha-D-glucosamine + holo-[ACP] + H(+). It functions in the pathway bacterial outer membrane biogenesis; LPS lipid A biosynthesis. Its function is as follows. Catalyzes the N-acylation of UDP-3-O-acylglucosamine using 3-hydroxyacyl-ACP as the acyl donor. Is involved in the biosynthesis of lipid A, a phosphorylated glycolipid that anchors the lipopolysaccharide to the outer membrane of the cell. The protein is UDP-3-O-acylglucosamine N-acyltransferase of Chlamydia pneumoniae (Chlamydophila pneumoniae).